The sequence spans 283 residues: Phosphatidylglycerol--prolipoprotein diacylglyceryl transferase (283 aa).

A run of 7 helical transmembrane segments spans residues L21–A41, L60–Y80, V95–W115, F124–L144, S176–I196, G203–V223, and M239–F259. R143 is an a 1,2-diacyl-sn-glycero-3-phospho-(1'-sn-glycerol) binding site.

Belongs to the Lgt family.

It localises to the cell inner membrane. The catalysed reaction is L-cysteinyl-[prolipoprotein] + a 1,2-diacyl-sn-glycero-3-phospho-(1'-sn-glycerol) = an S-1,2-diacyl-sn-glyceryl-L-cysteinyl-[prolipoprotein] + sn-glycerol 1-phosphate + H(+). Its pathway is protein modification; lipoprotein biosynthesis (diacylglyceryl transfer). Functionally, catalyzes the transfer of the diacylglyceryl group from phosphatidylglycerol to the sulfhydryl group of the N-terminal cysteine of a prolipoprotein, the first step in the formation of mature lipoproteins. In Aliivibrio salmonicida (strain LFI1238) (Vibrio salmonicida (strain LFI1238)), this protein is Phosphatidylglycerol--prolipoprotein diacylglyceryl transferase.